The primary structure comprises 467 residues: Argininosuccinate lyase (467 aa).

The protein belongs to the lyase 1 family. Argininosuccinate lyase subfamily.

The protein localises to the cytoplasm. The enzyme catalyses 2-(N(omega)-L-arginino)succinate = fumarate + L-arginine. It functions in the pathway amino-acid biosynthesis; L-arginine biosynthesis; L-arginine from L-ornithine and carbamoyl phosphate: step 3/3. The chain is Argininosuccinate lyase from Rhizobium etli (strain CIAT 652).